Reading from the N-terminus, the 33-residue chain is Helofensin-1 (33 aa).

Belongs to the beta-defensin family. Helofensin subfamily. Expressed by the venom gland.

The protein resides in the secreted. In terms of biological role, lethal toxin which possesses an inhibitory effect on direct electrical stimulation of the isolated hemi-diaphragm. Neither hemorrhagic nor hemolytic activities are detected. Phospholipase A2 activity, proteolytic activity and arginine esterolytic activity are absent. In Heloderma horridum horridum (Mexican beaded lizard), this protein is Helofensin-1.